We begin with the raw amino-acid sequence, 662 residues long: Protein distal antenna (662 aa).

An HTH psq-type domain is found at 21–72 (TKGKRPLRHLTATDKIDAIQRIHDGESKASVARDIGVPESTLRGWCKNEEKL). The segment at residues 48–68 (KASVARDIGVPESTLRGWCKN) is a DNA-binding region (H-T-H motif). 4 disordered regions span residues 265–299 (RNAR…STPS), 348–407 (YSQM…PEDT), 491–537 (PEDL…DDEV), and 558–596 (QSSP…KSTC). Residues 349 to 391 (SQMPRPSSPQQPQSTPPTTTTTQQQQPQSSTPPTATPPIVSTP) are compositionally biased toward low complexity. Residues 511–520 (FNPSPSTSIK) are compositionally biased toward polar residues. A compositionally biased stretch (acidic residues) spans 527-536 (VDEDEDEDDE).

As to quaternary structure, homomers. Interacts with itself, danr, ey and dac to form a complex (or complexes) containing the RD factors.

It is found in the nucleus. In terms of biological role, probable transcription factor with a role in the retinal determination (RD) network. Contributes to differentiation of antenna-specific characteristics. The chain is Protein distal antenna from Culex quinquefasciatus (Southern house mosquito).